Reading from the N-terminus, the 1182-residue chain is Tyrosine-protein kinase ABL2 (1182 aa).

Residues M1 to A42 are disordered. G2 is lipidated: N-myristoyl glycine. The segment at G2–E106 is CAP. Low complexity predominate over residues R20–P30. The residue at position 97 (S97) is a Phosphoserine. One can recognise an SH3 domain in the interval S107–S167. Phosphotyrosine is present on residues Y116, Y161, Y174, Y185, Y218, and Y231. Positions W173–A263 constitute an SH2 domain. Position 261 is a phosphotyrosine; by ABL1 and autocatalysis (Y261). Y272 is subject to Phosphotyrosine; by autocatalysis. Position 275 is a phosphoserine (S275). A Protein kinase domain is found at I288–F539. An ATP-binding site is contributed by L294–V302. 2 positions are modified to phosphotyrosine: Y299 and Y303. ATP contacts are provided by residues K317 and E362–N368. Catalysis depends on D409, which acts as the Proton acceptor. The Kinase activation loop signature appears at D427–W451. A Phosphotyrosine; by autocatalysis and SRC-type Tyr-kinases modification is found at Y439. Phosphotyrosine is present on Y459. Residue Y568 is modified to Phosphotyrosine; by autocatalysis. Phosphoserine is present on residues S606, S621, S632, S634, and S656. Disordered regions lie at residues I612 to E642 and S655 to R674. A Nuclear localization signal motif is present at residues K659 to R661. Phosphoserine is present on residues S670, S671, and S672. Y684 carries the post-translational modification Phosphotyrosine; by autocatalysis. Residues S695–K930 form an F-actin-binding region. The residue at position 719 (Y719) is a Phosphotyrosine. The tract at residues L765–Q796 is disordered. Residue K778 is modified to N6-acetyllysine. Positions R782–L793 are enriched in polar residues. Phosphoserine is present on S785. T802 carries the post-translational modification Phosphothreonine. Residues R809–E825 are compositionally biased toward polar residues. The interval R809–G858 is disordered. 2 positions are modified to phosphoserine: S819 and S822. Residues N827–K851 are compositionally biased toward basic and acidic residues. Phosphoserine is present on residues S915 and S936. The segment at H964–A1059 is disordered. Residues E1020–R1182 form an F-actin-binding region.

The protein belongs to the protein kinase superfamily. Tyr protein kinase family. ABL subfamily. In terms of assembly, interacts with PSMA7. Interacts with CTTN. Found in a complex with ABL1, ABL2, CRK and UNC119; leading to the inhibition of CRK phosphorylation by ABL kinases. Mg(2+) serves as cofactor. Mn(2+) is required as a cofactor. In terms of processing, phosphorylated at Tyr-261 by ABL1 in response to oxidative stress. Phosphorylated by PDGFRB. Post-translationally, polyubiquitinated. Polyubiquitination of ABL2 leads to degradation. As to expression, most abundant in adult mouse brain, especially in synapse-rich regions.

It localises to the cytoplasm. The protein localises to the cytoskeleton. It catalyses the reaction L-tyrosyl-[protein] + ATP = O-phospho-L-tyrosyl-[protein] + ADP + H(+). Its activity is regulated as follows. Stabilized in the inactive form by an association between the SH3 domain and the SH2-TK linker region, interactions of the N-terminal cap, and contributions from an N-terminal myristoyl group and phospholipids. Activated by autophosphorylation as well as by SRC-family kinase-mediated phosphorylation. Activated by RIN1 binding to the SH2 and SH3 domains. Inhibited by imatinib mesylate (Gleevec). Phosphatidylinositol 4,5-bisphosphate (PIP2), a highly abundant phosphoinositide known to regulate cytoskeletal and membrane proteins, inhibits the tyrosine kinase activity. Its function is as follows. Non-receptor tyrosine-protein kinase that plays an ABL1-overlapping role in key processes linked to cell growth and survival such as cytoskeleton remodeling in response to extracellular stimuli, cell motility and adhesion, receptor endocytosis, autophagy, DNA damage response and apoptosis. Coordinates actin remodeling through tyrosine phosphorylation of proteins controlling cytoskeleton dynamics like MYH10 (involved in movement); CTTN (involved in signaling); or TUBA1 and TUBB (microtubule subunits). Binds directly F-actin and regulates actin cytoskeletal structure through its F-actin-bundling activity. Involved in the regulation of cell adhesion and motility through phosphorylation of key regulators of these processes such as CRK, CRKL or DOK1. Required for adhesion-dependent phosphorylation of ARHGAP35 which promotes its association with RASA1, resulting in recruitment of ARHGAP35 to the cell periphery where it inhibits RHO. Phosphorylates multiple receptor tyrosine kinases like PDGFRB and other substrates which are involved in endocytosis regulation such as RIN1. In brain, may regulate neurotransmission by phosphorylating proteins at the synapse. Finally, functions as its own regulator through autocatalytic activity as well as through phosphorylation of its inhibitor, ABI1. Positively regulates chemokine-mediated T-cell migration, polarization, and homing to lymph nodes and immune-challenged tissues, potentially via activation of NEDD9/HEF1 and RAP1. This chain is Tyrosine-protein kinase ABL2, found in Mus musculus (Mouse).